The chain runs to 257 residues: MSGAGNDFIVIDNRQGLFNLTHEQVRAMCTRRTGIGADGLILLETSETADFRMNYHNADGFPGTMCGNGGRCAVWFAHLIGIRPTGKHYRFEAGPSTYEAEVTGEESVRLHMLPPSDFRDGLQAGAWNCHFVDTGSPHAIAYVNNLDQLDVLTEGGNIRHNKELFPDGTNVNFLEITAPDALSIRTFERGVEDETLACGTGTVAAALMSFRLGKVTSSLVRVKVKSGETLMVGFNEMMDEIYLEGPARAVYRGTITL.

2 residues coordinate substrate: N6 and N57. The active-site Proton donor is C66. Substrate contacts are provided by residues G67–N68, N170, and E188–R189. The Proton acceptor role is filled by C198. Residue G199–T200 coordinates substrate.

The protein belongs to the diaminopimelate epimerase family. As to quaternary structure, homodimer.

It localises to the cytoplasm. It catalyses the reaction (2S,6S)-2,6-diaminopimelate = meso-2,6-diaminopimelate. It functions in the pathway amino-acid biosynthesis; L-lysine biosynthesis via DAP pathway; DL-2,6-diaminopimelate from LL-2,6-diaminopimelate: step 1/1. Catalyzes the stereoinversion of LL-2,6-diaminopimelate (L,L-DAP) to meso-diaminopimelate (meso-DAP), a precursor of L-lysine and an essential component of the bacterial peptidoglycan. This Chlorobaculum tepidum (strain ATCC 49652 / DSM 12025 / NBRC 103806 / TLS) (Chlorobium tepidum) protein is Diaminopimelate epimerase.